Reading from the N-terminus, the 531-residue chain is Apolipoprotein N-acyltransferase (531 aa).

7 helical membrane-spanning segments follow: residues 8 to 28 (IILLSGVSRAFVGFLAGLLAV), 34 to 54 (FGIFAAAFVSFPVLVWLIDGV), 69 to 89 (PAAIGWSFGFGYFLGGLWWLG), 105 to 125 (LAVVGLPAVLGVFYALAVVIA), 136 to 156 (IAALALGFGIAEWLRGFVFTG), 178 to 198 (VVNLSTINMLAVFVFAAPALI), and 207 to 227 (GLAIAVALFTAHIAFGFYRLA). Positions 243–493 (VQPVIDQAKK…RGVLDTILPG (251 aa)) constitute a CN hydrolase domain. The active-site Proton acceptor is the Glu-287. Lys-351 is a catalytic residue. Catalysis depends on Cys-405, which acts as the Nucleophile. A helical transmembrane segment spans residues 507-527 (IFWLSMAILSIVASFSRFGFN).

It belongs to the CN hydrolase family. Apolipoprotein N-acyltransferase subfamily.

Its subcellular location is the cell inner membrane. The enzyme catalyses N-terminal S-1,2-diacyl-sn-glyceryl-L-cysteinyl-[lipoprotein] + a glycerophospholipid = N-acyl-S-1,2-diacyl-sn-glyceryl-L-cysteinyl-[lipoprotein] + a 2-acyl-sn-glycero-3-phospholipid + H(+). It participates in protein modification; lipoprotein biosynthesis (N-acyl transfer). Functionally, catalyzes the phospholipid dependent N-acylation of the N-terminal cysteine of apolipoprotein, the last step in lipoprotein maturation. In Sinorhizobium medicae (strain WSM419) (Ensifer medicae), this protein is Apolipoprotein N-acyltransferase.